Reading from the N-terminus, the 340-residue chain is Uridine nucleosidase (340 aa).

The active site involves histidine 254.

Belongs to the IUNH family.

Its subcellular location is the cytoplasm. It localises to the nucleus. The enzyme catalyses uridine + H2O = D-ribose + uracil. Functionally, also acts on cytidine. This chain is Uridine nucleosidase (URH1), found in Saccharomyces cerevisiae (strain ATCC 204508 / S288c) (Baker's yeast).